The primary structure comprises 485 residues: Outer membrane protein OprM (485 aa).

The N-terminal stretch at 1-17 (MKRSFLSLAVAAVVLSG) is a signal peptide. Cysteine 18 carries N-palmitoyl cysteine lipidation. The S-diacylglycerol cysteine moiety is linked to residue cysteine 18.

The protein belongs to the outer membrane factor (OMF) (TC 1.B.17) family. As to quaternary structure, component of the MexAB-OprM multidrug efflux complex, composed of six MexA subunits forming a hexameric tube, binding to a MexB trimer, which interact with the trimeric OprM outer membrane channel protein. The OprM homotrimer forms a 135 Angstroms-long pore. It consists of a beta-barrel, which is probably inserted in the outer membrane, and an alpha-barrel formed by alpha-helices which probably spans the periplasm. In the ground state the periplasmic end is closed, while the outer membrane end opening is 6-8 Angstroms in diameter. OprM does not directly contact MexB; instead, MexA joins MexB and OprM by forming a funnel-like hexamer anchored to the inner membrane. MexA may initially form a hexameric ring complex with MexB prior to OprM, then OprM undergoes a conformational change as it contacts MexA, allowing the periplasmic gate to open. It is thought that, under high intracellular substrate concentration, MexB ejects substrate into the tunnel formed by MexA-OprM; as the substrate level declines, conformational changes in MexB cause efflux to reduce and stop and the complex shifts to the closed state. MexB subunit acts as a substrate:proton antiporter and activity is enhanced significantly when in complex with MexA and OprM, in vitro.

It is found in the cell outer membrane. With respect to regulation, export of antibiotics and solvents is dramatically decreased in the presence of the protonophore carbonyl cyanide m-chlorophenylhydrazone (CCCP), therefore may be driven by a proton gradient. Antibiotic efflux is inhibited by pyridopyrimidine derivatives, such as ABI-PP, acting by binding to a hydrophobic pocket in MexB. In terms of biological role, the outer membrane component of the MexAB-OprM efflux system that confers multidrug resistance. Functions as the major efflux pump for n-hexane and p-xylene efflux. Has been shown in one study to be involved in the active efflux of the autoinducer N-(3-oxododecanoyl) homoserine lactone, thereby playing an indirect role in quorum-sensing; but has been shown in another study not to be involved in efflux of this autoinducer. Over-expression of the pump increases antibiotic and solvent efflux capacities. Can replace the OprJ outer membrane component of the MexCD-OprJ pump; the antibiotics exported are those exported by the intact MexCD pump, showing that efflux substrate specificity is not conferred by this component. Serves as the outer membrane component for the MexXY efflux system. Implicated in the secretion of the siderophore pyoverdine. OprM is probably involved in the efflux of the siderophore across the outer membrane. The sequence is that of Outer membrane protein OprM (oprM) from Pseudomonas aeruginosa (strain ATCC 15692 / DSM 22644 / CIP 104116 / JCM 14847 / LMG 12228 / 1C / PRS 101 / PAO1).